Reading from the N-terminus, the 389-residue chain is 1-deoxy-D-xylulose 5-phosphate reductoisomerase (389 aa).

NADPH contacts are provided by Thr10, Gly11, Ser12, Ile13, Asn38, and Asn122. Position 123 (Lys123) interacts with 1-deoxy-D-xylulose 5-phosphate. An NADPH-binding site is contributed by Glu124. Asp148 provides a ligand contact to Mn(2+). Residues Ser149, Glu150, Ser173, and His196 each contribute to the 1-deoxy-D-xylulose 5-phosphate site. Residue Glu150 participates in Mn(2+) binding. Gly202 contributes to the NADPH binding site. Ser209, Asn214, Lys215, and Glu218 together coordinate 1-deoxy-D-xylulose 5-phosphate. Glu218 contacts Mn(2+).

This sequence belongs to the DXR family. Requires Mg(2+) as cofactor. Mn(2+) is required as a cofactor.

It catalyses the reaction 2-C-methyl-D-erythritol 4-phosphate + NADP(+) = 1-deoxy-D-xylulose 5-phosphate + NADPH + H(+). The protein operates within isoprenoid biosynthesis; isopentenyl diphosphate biosynthesis via DXP pathway; isopentenyl diphosphate from 1-deoxy-D-xylulose 5-phosphate: step 1/6. Catalyzes the NADPH-dependent rearrangement and reduction of 1-deoxy-D-xylulose-5-phosphate (DXP) to 2-C-methyl-D-erythritol 4-phosphate (MEP). In Wolbachia sp. subsp. Brugia malayi (strain TRS), this protein is 1-deoxy-D-xylulose 5-phosphate reductoisomerase.